A 362-amino-acid chain; its full sequence is Myricetin 3'/5'-O-methyltransferase 1 (362 aa).

Residue aspartate 229 participates in S-adenosyl-L-methionine binding. The active-site Proton acceptor is histidine 267.

It belongs to the class I-like SAM-binding methyltransferase superfamily. Cation-independent O-methyltransferase family. Homodimer. Mainly expressed in leaves secreting glandular trichomes types 1 and 4 and, to a lesser extent, in storage trichomes type 6.

It carries out the reaction myricetin + S-adenosyl-L-methionine = laricitrin + S-adenosyl-L-homocysteine + H(+). It catalyses the reaction laricitrin + S-adenosyl-L-methionine = syringetin + S-adenosyl-L-homocysteine + H(+). The enzyme catalyses a 3'-hydroxyflavone + S-adenosyl-L-methionine = a 3'-methoxyflavone + S-adenosyl-L-homocysteine + H(+). The catalysed reaction is a 5'-hydroxy-3'-methoxyflavone + S-adenosyl-L-methionine = a 3',5'-dimethoxyflavone + S-adenosyl-L-homocysteine + H(+). It carries out the reaction quercetin + S-adenosyl-L-methionine = isorhamnetin + S-adenosyl-L-homocysteine + H(+). It catalyses the reaction rhamnetin + S-adenosyl-L-methionine = rhamnacene + S-adenosyl-L-homocysteine + H(+). The enzyme catalyses 3',4',5,7-tetrahydroxy-3-methoxyflavone + S-adenosyl-L-methionine = 3,3'-O-dimethylquercetin + S-adenosyl-L-homocysteine + H(+). It participates in flavonoid metabolism. Functionally, flavonoid 3'/5'-O-methyltransferase involved in the biosynthesis of polymethoxylated flavonoids natural products such as myricetin derivatives, aroma compounds possessing antioxidant properties and exhibiting pharmacological activities such as anti-carcinogen, anti-viral, anti-thrombotic, anti-diabetic, anti-atherosclerotic, and anti-inflammatory effects. Catalyzes S-adenosylmethionine-dependent regioselective 3'/5'-O-methylation of flavonoids; active on various hydroxylated flavonoid substrates, including myricetin and quercetin, but inactive toward kaempferol. Mediates the formation of 3'-methyl derivatives from quercetin, myricetin, 3-methyl quercetin and 7-methyl quercetin (rhamnetin), producing 3'-methyl quercetin (isorhamnetin), 3'-methyl myricetin (laricitrin), 3,3'-dimethyl quercetin (3-O-methylisorhamnetin) and 7,3'-dimethyl quercetin (7-O-methylisorhamnetin), respectively. Triggers the 5'-O-methylation of 3'-methyl myricetin (laricitrin), thus leading to production of 3',5'-dimethyl myricetin (syringetin). The sequence is that of Myricetin 3'/5'-O-methyltransferase 1 from Solanum habrochaites (Wild tomato).